Consider the following 404-residue polypeptide: Probable tRNA sulfurtransferase (404 aa).

In terms of domain architecture, THUMP spans 60–165 (QPVAESLKQI…EEAAYISYET (106 aa)). ATP contacts are provided by residues 183–184 (ML), 208–209 (HF), Arg-265, Gly-287, and Gln-296.

Belongs to the ThiI family.

It is found in the cytoplasm. It carries out the reaction [ThiI sulfur-carrier protein]-S-sulfanyl-L-cysteine + a uridine in tRNA + 2 reduced [2Fe-2S]-[ferredoxin] + ATP + H(+) = [ThiI sulfur-carrier protein]-L-cysteine + a 4-thiouridine in tRNA + 2 oxidized [2Fe-2S]-[ferredoxin] + AMP + diphosphate. It catalyses the reaction [ThiS sulfur-carrier protein]-C-terminal Gly-Gly-AMP + S-sulfanyl-L-cysteinyl-[cysteine desulfurase] + AH2 = [ThiS sulfur-carrier protein]-C-terminal-Gly-aminoethanethioate + L-cysteinyl-[cysteine desulfurase] + A + AMP + 2 H(+). Its pathway is cofactor biosynthesis; thiamine diphosphate biosynthesis. Catalyzes the ATP-dependent transfer of a sulfur to tRNA to produce 4-thiouridine in position 8 of tRNAs, which functions as a near-UV photosensor. Also catalyzes the transfer of sulfur to the sulfur carrier protein ThiS, forming ThiS-thiocarboxylate. This is a step in the synthesis of thiazole, in the thiamine biosynthesis pathway. The sulfur is donated as persulfide by IscS. The chain is Probable tRNA sulfurtransferase from Streptococcus gordonii (strain Challis / ATCC 35105 / BCRC 15272 / CH1 / DL1 / V288).